A 360-amino-acid polypeptide reads, in one-letter code: Phospho-N-acetylmuramoyl-pentapeptide-transferase (360 aa).

A run of 10 helical transmembrane segments spans residues 27 to 47, 72 to 92, 94 to 114, 132 to 152, 168 to 188, 199 to 219, 236 to 256, 263 to 283, 288 to 308, and 338 to 358; these read IVSL…LIAW, PTMG…MWAY, SNPY…VGFI, WKYF…YSIG, IMPQ…VGTS, GLAI…AWAT, AGEL…FLWF, VFMG…IAVL, FLLV…ILQV, and VIVR…ATLK.

This sequence belongs to the glycosyltransferase 4 family. MraY subfamily. Mg(2+) is required as a cofactor.

It is found in the cell inner membrane. The enzyme catalyses UDP-N-acetyl-alpha-D-muramoyl-L-alanyl-gamma-D-glutamyl-meso-2,6-diaminopimeloyl-D-alanyl-D-alanine + di-trans,octa-cis-undecaprenyl phosphate = di-trans,octa-cis-undecaprenyl diphospho-N-acetyl-alpha-D-muramoyl-L-alanyl-D-glutamyl-meso-2,6-diaminopimeloyl-D-alanyl-D-alanine + UMP. It functions in the pathway cell wall biogenesis; peptidoglycan biosynthesis. In terms of biological role, catalyzes the initial step of the lipid cycle reactions in the biosynthesis of the cell wall peptidoglycan: transfers peptidoglycan precursor phospho-MurNAc-pentapeptide from UDP-MurNAc-pentapeptide onto the lipid carrier undecaprenyl phosphate, yielding undecaprenyl-pyrophosphoryl-MurNAc-pentapeptide, known as lipid I. This is Phospho-N-acetylmuramoyl-pentapeptide-transferase from Yersinia pestis bv. Antiqua (strain Angola).